Consider the following 218-residue polypeptide: Interleukin-37 (218 aa).

The tract at residues 1-40 (MSFVGENSGVKMGSEDWEKDEPQCCLEDPAGSPLEPGPSL) is disordered. Residues 1-45 (MSFVGENSGVKMGSEDWEKDEPQCCLEDPAGSPLEPGPSLPTMNF) constitute a propeptide, removed in mature form. A compositionally biased stretch (basic and acidic residues) spans 13–22 (GSEDWEKDEP).

Belongs to the IL-1 family. In terms of assembly, interacts with SMAD3. Binds IL18R1, but not to IL1R1, with lower affinity than IL18, and does not seem to act as a receptor antagonist for IL18. Interacts with cargo receptor TMED10; the interaction mediates the translocation from the cytoplasm into the ERGIC (endoplasmic reticulum-Golgi intermediate compartment) and thereby secretion. Post-translationally, proteolytically converted to the mature form by CASP1. As to expression, in general, low constitutive expression, if any, in healthy tissues; high expression in inflammatory counterparts, including in synovial tissues from individuals with active rheumatoid arthritis. Isoform A, isoform B and isoform C are expressed in testis, colon, placenta, lung and lymph node. Isoform D and isoform E were found only in testis and bone marrow. Whereas only isoform A is found in brain, only isoform B in kidney and only isoform C in heart.

The protein resides in the cytoplasm. It localises to the cytosol. The protein localises to the nucleus. It is found in the secreted. Functionally, immune regulatory cytokine that acts as a suppressor of innate inflammatory and immune responses involved in curbing excessive inflammation. Signaling can occur via two mechanisms, intracellularly through nuclear translocation with SMAD3 and extracellularly after secretion and binding to its receptor composed of IL18R1 and IL18RAP. Suppresses, or reduces, pro-inflammatory cytokine production, including IL1A and IL6, as well as CCL12, CSF1, CSF2, CXCL13, IL1B, IL23A and IL1RN, but spares anti-inflammatory cytokines. Inhibits dendritic cell activation. This chain is Interleukin-37, found in Homo sapiens (Human).